A 363-amino-acid chain; its full sequence is GTPase Obg (363 aa).

The region spanning 1–159 is the Obg domain; it reads MKFIDEAKIY…LELRLELRVL (159 aa). Residues 160–338 enclose the OBG-type G domain; the sequence is ADVGLLGLPN…LIYAISEALE (179 aa). Residues 166 to 173, 191 to 195, 213 to 216, 284 to 287, and 319 to 321 contribute to the GTP site; these read GLPNAGKS, FTTLH, DVPG, NKLD, and AAI. 2 residues coordinate Mg(2+): Ser173 and Thr193. The disordered stretch occupies residues 342-363; that stretch reads RPEIGDLDDNDEDSDEIIRDTE. A compositionally biased stretch (acidic residues) spans 346-356; the sequence is GDLDDNDEDSD.

This sequence belongs to the TRAFAC class OBG-HflX-like GTPase superfamily. OBG GTPase family. As to quaternary structure, monomer. It depends on Mg(2+) as a cofactor.

It is found in the cytoplasm. An essential GTPase which binds GTP, GDP and possibly (p)ppGpp with moderate affinity, with high nucleotide exchange rates and a fairly low GTP hydrolysis rate. Plays a role in control of the cell cycle, stress response, ribosome biogenesis and in those bacteria that undergo differentiation, in morphogenesis control. This Dechloromonas aromatica (strain RCB) protein is GTPase Obg.